The following is a 252-amino-acid chain: tRNA (guanine-N(1)-)-methyltransferase (252 aa).

Residues glycine 113 and isoleucine 133–leucine 138 each bind S-adenosyl-L-methionine.

It belongs to the RNA methyltransferase TrmD family. Homodimer.

It is found in the cytoplasm. It carries out the reaction guanosine(37) in tRNA + S-adenosyl-L-methionine = N(1)-methylguanosine(37) in tRNA + S-adenosyl-L-homocysteine + H(+). Its function is as follows. Specifically methylates guanosine-37 in various tRNAs. This Nitrosococcus oceani (strain ATCC 19707 / BCRC 17464 / JCM 30415 / NCIMB 11848 / C-107) protein is tRNA (guanine-N(1)-)-methyltransferase.